We begin with the raw amino-acid sequence, 325 residues long: 33 kDa chaperonin (325 aa).

2 disulfide bridges follow: C260-C262 and C293-C296.

The protein belongs to the HSP33 family. Post-translationally, under oxidizing conditions two disulfide bonds are formed involving the reactive cysteines. Under reducing conditions zinc is bound to the reactive cysteines and the protein is inactive.

The protein localises to the cytoplasm. Redox regulated molecular chaperone. Protects both thermally unfolding and oxidatively damaged proteins from irreversible aggregation. Plays an important role in the bacterial defense system toward oxidative stress. This Aquifex aeolicus (strain VF5) protein is 33 kDa chaperonin.